The chain runs to 291 residues: Small ribosomal subunit protein uS2 (291 aa).

A disordered region spans residues 256–291; that stretch reads STTAPPNWEATGGDWATSTAPAEGWAGDAPAGETKW.

The protein belongs to the universal ribosomal protein uS2 family. Component of the small ribosomal subunit. Mature ribosomes consist of a small (40S) and a large (60S) subunit. The 40S subunit contains about 33 different proteins and 1 molecule of RNA (18S). The 60S subunit contains about 49 different proteins and 3 molecules of RNA (25S, 5.8S and 5S). Interacts with RPS21.

The protein resides in the cytoplasm. Functionally, required for the assembly and/or stability of the 40S ribosomal subunit. Required for the processing of the 20S rRNA-precursor to mature 18S rRNA in a late step of the maturation of 40S ribosomal subunits. This is Small ribosomal subunit protein uS2 from Coccidioides immitis (strain RS) (Valley fever fungus).